The primary structure comprises 422 residues: Multifunctional CCA protein (422 aa).

ATP-binding residues include glycine 8 and arginine 11. Residues glycine 8 and arginine 11 each contribute to the CTP site. 2 residues coordinate Mg(2+): aspartate 21 and aspartate 23. 3 residues coordinate ATP: arginine 91, arginine 137, and arginine 140. 3 residues coordinate CTP: arginine 91, arginine 137, and arginine 140. Residues 228 to 329 (TGLHSLMALE…VKLLQSCDAW (102 aa)) form the HD domain. Positions 403–422 (FKQDNAPEAQEKGGEDVGLT) are disordered.

Belongs to the tRNA nucleotidyltransferase/poly(A) polymerase family. Bacterial CCA-adding enzyme type 1 subfamily. As to quaternary structure, monomer. Can also form homodimers and oligomers. It depends on Mg(2+) as a cofactor. Ni(2+) is required as a cofactor.

The catalysed reaction is a tRNA precursor + 2 CTP + ATP = a tRNA with a 3' CCA end + 3 diphosphate. The enzyme catalyses a tRNA with a 3' CCA end + 2 CTP + ATP = a tRNA with a 3' CCACCA end + 3 diphosphate. In terms of biological role, catalyzes the addition and repair of the essential 3'-terminal CCA sequence in tRNAs without using a nucleic acid template. Adds these three nucleotides in the order of C, C, and A to the tRNA nucleotide-73, using CTP and ATP as substrates and producing inorganic pyrophosphate. tRNA 3'-terminal CCA addition is required both for tRNA processing and repair. Also involved in tRNA surveillance by mediating tandem CCA addition to generate a CCACCA at the 3' terminus of unstable tRNAs. While stable tRNAs receive only 3'-terminal CCA, unstable tRNAs are marked with CCACCA and rapidly degraded. The protein is Multifunctional CCA protein of Hahella chejuensis (strain KCTC 2396).